Here is a 359-residue protein sequence, read N- to C-terminus: UDP-N-acetylglucosamine--N-acetylmuramyl-(pentapeptide) pyrophosphoryl-undecaprenol N-acetylglucosamine transferase (359 aa).

UDP-N-acetyl-alpha-D-glucosamine is bound by residues 15-17 (TGG), Asn-127, Arg-166, Ser-191, Ile-245, 264-269 (ALTVSE), and Gln-290.

The protein belongs to the glycosyltransferase 28 family. MurG subfamily.

It localises to the cell inner membrane. The enzyme catalyses di-trans,octa-cis-undecaprenyl diphospho-N-acetyl-alpha-D-muramoyl-L-alanyl-D-glutamyl-meso-2,6-diaminopimeloyl-D-alanyl-D-alanine + UDP-N-acetyl-alpha-D-glucosamine = di-trans,octa-cis-undecaprenyl diphospho-[N-acetyl-alpha-D-glucosaminyl-(1-&gt;4)]-N-acetyl-alpha-D-muramoyl-L-alanyl-D-glutamyl-meso-2,6-diaminopimeloyl-D-alanyl-D-alanine + UDP + H(+). It functions in the pathway cell wall biogenesis; peptidoglycan biosynthesis. Functionally, cell wall formation. Catalyzes the transfer of a GlcNAc subunit on undecaprenyl-pyrophosphoryl-MurNAc-pentapeptide (lipid intermediate I) to form undecaprenyl-pyrophosphoryl-MurNAc-(pentapeptide)GlcNAc (lipid intermediate II). The sequence is that of UDP-N-acetylglucosamine--N-acetylmuramyl-(pentapeptide) pyrophosphoryl-undecaprenol N-acetylglucosamine transferase from Pseudomonas putida (strain W619).